The chain runs to 550 residues: Urocanate hydratase (550 aa).

Residues 48-49, Gln-126, 172-174, Glu-192, Arg-197, 238-239, 259-263, 268-269, and Tyr-317 each bind NAD(+); these read GG, GMG, NA, QTSAH, and YL. Residue Cys-405 is part of the active site. Gly-487 is an NAD(+) binding site.

Belongs to the urocanase family. NAD(+) is required as a cofactor.

The protein localises to the cytoplasm. The enzyme catalyses 4-imidazolone-5-propanoate = trans-urocanate + H2O. It participates in amino-acid degradation; L-histidine degradation into L-glutamate; N-formimidoyl-L-glutamate from L-histidine: step 2/3. In terms of biological role, catalyzes the conversion of urocanate to 4-imidazolone-5-propionate. In Saccharopolyspora erythraea (strain ATCC 11635 / DSM 40517 / JCM 4748 / NBRC 13426 / NCIMB 8594 / NRRL 2338), this protein is Urocanate hydratase.